Consider the following 159-residue polypeptide: Regulatory protein RecX (159 aa).

The protein belongs to the RecX family.

It is found in the cytoplasm. In terms of biological role, modulates RecA activity. This Ralstonia pickettii (strain 12J) protein is Regulatory protein RecX.